The following is a 1377-amino-acid chain: ATP-dependent helicase/nuclease subunit A (1377 aa).

The region spanning 4–478 (TSWTPGQQKV…IDLSKNFRSR (475 aa)) is the UvrD-like helicase ATP-binding domain. 25 to 32 (AAAGSGKT) is a binding site for ATP. Residues 526–867 (FLFSDTKTEL…RIMSIHKSKG (342 aa)) enclose the UvrD-like helicase C-terminal domain. Residues 1036-1065 (FEEESDEQSDEERSDEERSDGEQSDGEQSD) show a composition bias toward acidic residues. Residues 1036–1072 (FEEESDEQSDEERSDEERSDGEQSDGEQSDGEQPRKD) are disordered.

The protein belongs to the helicase family. AddA subfamily. Heterodimer of AddA and AddB/RexB. The cofactor is Mg(2+).

The enzyme catalyses Couples ATP hydrolysis with the unwinding of duplex DNA by translocating in the 3'-5' direction.. It catalyses the reaction ATP + H2O = ADP + phosphate + H(+). Functionally, the heterodimer acts as both an ATP-dependent DNA helicase and an ATP-dependent, dual-direction single-stranded exonuclease. Recognizes the chi site generating a DNA molecule suitable for the initiation of homologous recombination. The AddA nuclease domain is required for chi fragment generation; this subunit has the helicase and 3' -&gt; 5' nuclease activities. This is ATP-dependent helicase/nuclease subunit A from Lachnoclostridium phytofermentans (strain ATCC 700394 / DSM 18823 / ISDg) (Clostridium phytofermentans).